Here is a 390-residue protein sequence, read N- to C-terminus: MMQSAAVPAEGAVKGLPEMLGVPMQQIPQCAGCNQHILDKFILKVLDRHWHSSCLKCADCQMQLADRCFSRAGSVYCKEDFFKRFGTKCTACQQGIPPTQVVRKAQDFVYHLHCFACIICNRQLATGDEFYLMEDGRLVCKEDYETAKQNDDSEAGAKRPRTTITAKQLETLKNAYKNSPKPARHVREQLSSETGLDMRVVQVWFQNRRAKEKRLKKDAGRHRWGQFYKSVKRSRGGSKQEKESSAEDCGVSDSELSFREDQILSELGHTNRIYGNVGDVTGGQLMNGSFSMDGTGQSYQDLRDGSPYGIPQSPSSISSLPSHAPLLNGLDYTVDSNLGIIAHAGQGVSQTLRAMAGGPTSDLSTGSSVGYPDFPTSPASWLDEMDHPPF.

LIM zinc-binding domains follow at residues P28–T87 and K88–N150. The segment at residues A157–K216 is a DNA-binding region (homeobox). An interaction with DNA region spans residues R161–K181. Positions R199–K211 are interaction with 5-mCpG DNA. Disordered regions lie at residues V231–D253 and M355–F390.

Transient expression in ventrolateral regions of the developing neural tube and hindbrain.

Its subcellular location is the nucleus. In terms of biological role, may play a critical role in the development of respiratory control mechanisms and in the normal growth and maturation of the lung. Binds preferentially to methylated DNA. This is LIM/homeobox protein Lhx4 (Lhx4) from Mus musculus (Mouse).